The following is a 491-amino-acid chain: Leucine aminopeptidase 1 (491 aa).

The Zn(2+) site is built by Lys252 and Asp257. Lys264 is a catalytic residue. 3 residues coordinate Zn(2+): Asp275, Asp334, and Glu336. Arg338 is an active-site residue.

The protein belongs to the peptidase M17 family. The cofactor is Zn(2+). In terms of tissue distribution, expressed in the buccal cavity, pharynx, anterior gut and rectum.

It catalyses the reaction Release of an N-terminal amino acid, Xaa-|-Yaa-, in which Xaa is preferably Leu, but may be other amino acids including Pro although not Arg or Lys, and Yaa may be Pro. Amino acid amides and methyl esters are also readily hydrolyzed, but rates on arylamides are exceedingly low.. Probably acts as a digestive enzyme. This chain is Leucine aminopeptidase 1 (lap-1), found in Caenorhabditis elegans.